We begin with the raw amino-acid sequence, 26 residues long: Delta-hemolysin (26 aa).

Methionine 1 bears the N-formylmethionine mark.

The protein belongs to the delta-lysin family.

The protein resides in the secreted. Its subcellular location is the host cell membrane. Lyses erythrocytes and many other mammalian cells. The sequence is that of Delta-hemolysin (hld) from Staphylococcus aureus (strain MSSA476).